A 191-amino-acid polypeptide reads, in one-letter code: dCTP deaminase, dUMP-forming (191 aa).

DCTP-binding positions include 101-106 (KSSLGR), D119, 127-129 (TLE), Q148, Y162, and Q174. E129 acts as the Proton donor/acceptor in catalysis. The segment at 169 to 191 (SRYQGQRGPTASRSFQNFHRTQV) is disordered. A compositionally biased stretch (polar residues) spans 171–191 (YQGQRGPTASRSFQNFHRTQV).

It belongs to the dCTP deaminase family. Homotrimer.

It carries out the reaction dCTP + 2 H2O = dUMP + NH4(+) + diphosphate. It functions in the pathway pyrimidine metabolism; dUMP biosynthesis; dUMP from dCTP: step 1/1. In terms of biological role, bifunctional enzyme that catalyzes both the deamination of dCTP to dUTP and the hydrolysis of dUTP to dUMP without releasing the toxic dUTP intermediate. The chain is dCTP deaminase, dUMP-forming from Streptomyces griseus subsp. griseus (strain JCM 4626 / CBS 651.72 / NBRC 13350 / KCC S-0626 / ISP 5235).